The sequence spans 537 residues: Synaptotagmin-C (537 aa).

Over 1–52 (MSGDGEDELCRNALALVNELCFSVRGNHNNEKCIEFSYLLRDRDRTRHIETD) the chain is Vesicular. The chain crosses the membrane as a helical span at residues 53–78 (ISVSLLSVIVTFCGIVLLGVSLFVSW). The Cytoplasmic segment spans residues 79-537 (KLCWIPWRDK…TIVVESPHSV (459 aa)). 2 disordered regions span residues 92–111 (PQRR…HHSH) and 142–200 (IKLS…EFGT). Positions 100 to 110 (HPHQHLHHHHS) are enriched in basic residues. Over residues 143–174 (KLSQTSPDIPVDTSSGSKENNIPNAHSQQQVS) the composition is skewed to polar residues. Positions 228–477 (EAKKHQKVNC…VIGMCRVGNA (250 aa)) are phospholipid binding. C2 domains lie at 236–357 (NCGR…TIWR) and 368–501 (DLGE…EQWH). Positions 267, 273, 325, 326, 327, 330, 333, 399, 405, 459, and 461 each coordinate Ca(2+).

It belongs to the synaptotagmin family. In terms of assembly, homodimer or homotrimer (possible). Ca(2+) serves as cofactor.

It is found in the cytoplasmic vesicle. Its subcellular location is the secretory vesicle. It localises to the synaptic vesicle membrane. The protein localises to the synapse. In terms of biological role, may have a regulatory role in the membrane interactions during trafficking of synaptic vesicles at the active zone of the synapse. It binds acidic phospholipids with a specificity that requires the presence of both an acidic head group and a diacyl backbone. In Diplobatis ommata (Ocellated electric ray), this protein is Synaptotagmin-C (P65-C).